A 223-amino-acid chain; its full sequence is ATP-dependent dethiobiotin synthetase BioD (223 aa).

Residue Thr16 coordinates Mg(2+). Lys37 is a catalytic residue. Residue Ser41 coordinates substrate. Mg(2+) is bound by residues Asp50 and Glu111. Residues Asp50, 111 to 114, and 171 to 172 contribute to the ATP site; these read EGAG and NR.

It belongs to the dethiobiotin synthetase family. As to quaternary structure, homodimer. Mg(2+) is required as a cofactor.

Its subcellular location is the cytoplasm. It carries out the reaction (7R,8S)-7,8-diammoniononanoate + CO2 + ATP = (4R,5S)-dethiobiotin + ADP + phosphate + 3 H(+). The protein operates within cofactor biosynthesis; biotin biosynthesis; biotin from 7,8-diaminononanoate: step 1/2. Its function is as follows. Catalyzes a mechanistically unusual reaction, the ATP-dependent insertion of CO2 between the N7 and N8 nitrogen atoms of 7,8-diaminopelargonic acid (DAPA, also called 7,8-diammoniononanoate) to form a ureido ring. This is ATP-dependent dethiobiotin synthetase BioD from Anaeromyxobacter dehalogenans (strain 2CP-1 / ATCC BAA-258).